The sequence spans 598 residues: Serine hydroxymethyltransferase 7 (598 aa).

The tract at residues 57–85 (QLLEQKAEKTTTVDEPKKDGGGGGDQKED) is disordered. The segment covering 61 to 85 (QKAEKTTTVDEPKKDGGGGGDQKED) has biased composition (basic and acidic residues). Position 370 is an N6-(pyridoxal phosphate)lysine (Lys370).

Belongs to the SHMT family. Homotetramer. Requires pyridoxal 5'-phosphate as cofactor.

Its subcellular location is the cytoplasm. The catalysed reaction is (6R)-5,10-methylene-5,6,7,8-tetrahydrofolate + glycine + H2O = (6S)-5,6,7,8-tetrahydrofolate + L-serine. It participates in one-carbon metabolism; tetrahydrofolate interconversion. Functionally, catalyzes the interconversion of serine and glycine. In Arabidopsis thaliana (Mouse-ear cress), this protein is Serine hydroxymethyltransferase 7 (SHM7).